The following is a 459-amino-acid chain: V-type ATP synthase beta chain (459 aa).

This sequence belongs to the ATPase alpha/beta chains family.

Produces ATP from ADP in the presence of a proton gradient across the membrane. The V-type beta chain is a regulatory subunit. In Clostridium botulinum (strain Alaska E43 / Type E3), this protein is V-type ATP synthase beta chain.